The following is a 238-amino-acid chain: Ephrin-A3 (238 aa).

Residues 1–22 form the signal peptide; it reads MAAAPLLLLLLLVPVPLLPLLA. Residues 30 to 169 form the Ephrin RBD domain; it reads GNRHAVYWNS…RMKVFVCCAS (140 aa). Residues N38, N67, and N100 are each glycosylated (N-linked (GlcNAc...) asparagine). Cystine bridges form between C63–C110 and C99–C158. G214 is lipidated: GPI-anchor amidated glycine. Residues 215–238 constitute a propeptide, removed in mature form; sequence TSPKREHLPLAVGIAFFLMTFLAS.

The protein belongs to the ephrin family. In terms of assembly, interacts with EPHA8; activates EPHA8. In terms of tissue distribution, expressed in brain, skeletal muscle, spleen, thymus, prostate, testis, ovary, small intestine, and peripheral blood leukocytes.

Its subcellular location is the cell membrane. In terms of biological role, cell surface GPI-bound ligand for Eph receptors, a family of receptor tyrosine kinases which are crucial for migration, repulsion and adhesion during neuronal, vascular and epithelial development. Binds promiscuously Eph receptors residing on adjacent cells, leading to contact-dependent bidirectional signaling into neighboring cells. The signaling pathway downstream of the receptor is referred to as forward signaling while the signaling pathway downstream of the ephrin ligand is referred to as reverse signaling. This Homo sapiens (Human) protein is Ephrin-A3 (EFNA3).